Reading from the N-terminus, the 1036-residue chain is DNA-directed RNA polymerase subunit beta (1036 aa).

The protein belongs to the RNA polymerase beta chain family. In plastids the minimal PEP RNA polymerase catalytic core is composed of four subunits: alpha, beta, beta', and beta''. When a (nuclear-encoded) sigma factor is associated with the core the holoenzyme is formed, which can initiate transcription.

It is found in the plastid. The protein resides in the chloroplast. It catalyses the reaction RNA(n) + a ribonucleoside 5'-triphosphate = RNA(n+1) + diphosphate. Functionally, DNA-dependent RNA polymerase catalyzes the transcription of DNA into RNA using the four ribonucleoside triphosphates as substrates. In Cyanidioschyzon merolae (strain NIES-3377 / 10D) (Unicellular red alga), this protein is DNA-directed RNA polymerase subunit beta.